The sequence spans 415 residues: MNGNEFGRLFRLTTFGESHGDAMGCTVSGVPAGVELSEEAIQEDLDRRKPGQSMITTSRGEPDKVSIKSGLQDGYTTGTPIGMVIQNKDARSGKYEPFITAPRPSHGDYTYSAKFGTRNWGGGGRSSARETVNWVAAGGVAKQVLAQSDYDVQIKAHVCQIGDVVADDVTWEEMLEHSEDNEVRCGDPDAAEEMRDLADEYQKEGDSIGGAIYFECRGVPRGLGAPRFDSIPARLGQAMYSIPAVTDFELGIGRDARTATGTDYTEDWEFGESEATASENASGDEPRARGDPKPVGNDHGGIQGGITTGDPIYGEVTWHAPVSFPKTQETVDWETGERKEITVTGRHDPVLPPRAVPVVEAMLYCTVLDFMLLGGRINPDRLDDRPGEYDTDYHPSSPRNDPEDADTHATTVDED.

Residues 43 to 72 (EDLDRRKPGQSMITTSRGEPDKVSIKSGLQ) form a disordered region. NADP(+) is bound at residue R48. Residues 125 to 127 (RSS), G304, 319 to 323 (HAPVS), and R346 contribute to the FMN site. The tract at residues 262–310 (TDYTEDWEFGESEATASENASGDEPRARGDPKPVGNDHGGIQGGITTGD) is disordered. A compositionally biased stretch (gly residues) spans 298 to 307 (DHGGIQGGIT). Basic and acidic residues predominate over residues 379–393 (PDRLDDRPGEYDTDY). The disordered stretch occupies residues 379-415 (PDRLDDRPGEYDTDYHPSSPRNDPEDADTHATTVDED).

This sequence belongs to the chorismate synthase family. The cofactor is FMNH2.

The catalysed reaction is 5-O-(1-carboxyvinyl)-3-phosphoshikimate = chorismate + phosphate. It functions in the pathway metabolic intermediate biosynthesis; chorismate biosynthesis; chorismate from D-erythrose 4-phosphate and phosphoenolpyruvate: step 7/7. Catalyzes the anti-1,4-elimination of the C-3 phosphate and the C-6 proR hydrogen from 5-enolpyruvylshikimate-3-phosphate (EPSP) to yield chorismate, which is the branch point compound that serves as the starting substrate for the three terminal pathways of aromatic amino acid biosynthesis. This reaction introduces a second double bond into the aromatic ring system. This Halomicrobium mukohataei (strain ATCC 700874 / DSM 12286 / JCM 9738 / NCIMB 13541) (Haloarcula mukohataei) protein is Chorismate synthase.